Here is an 875-residue protein sequence, read N- to C-terminus: Valine--tRNA ligase (875 aa).

The short motif at 44 to 54 (PNVTGKLHLGH) is the 'HIGH' region element. Residues 520 to 524 (KMSKS) carry the 'KMSKS' region motif. Lys-523 provides a ligand contact to ATP. A coiled-coil region spans residues 804-875 (LEGLINIEEE…VRARLAQLKQ (72 aa)).

It belongs to the class-I aminoacyl-tRNA synthetase family. ValS type 1 subfamily. As to quaternary structure, monomer.

The protein resides in the cytoplasm. It catalyses the reaction tRNA(Val) + L-valine + ATP = L-valyl-tRNA(Val) + AMP + diphosphate. In terms of biological role, catalyzes the attachment of valine to tRNA(Val). As ValRS can inadvertently accommodate and process structurally similar amino acids such as threonine, to avoid such errors, it has a 'posttransfer' editing activity that hydrolyzes mischarged Thr-tRNA(Val) in a tRNA-dependent manner. This Anoxybacillus flavithermus (strain DSM 21510 / WK1) protein is Valine--tRNA ligase.